The primary structure comprises 572 residues: Formate--tetrahydrofolate ligase (572 aa).

65–72 (TPLGEGKT) is a binding site for ATP.

It belongs to the formate--tetrahydrofolate ligase family.

It carries out the reaction (6S)-5,6,7,8-tetrahydrofolate + formate + ATP = (6R)-10-formyltetrahydrofolate + ADP + phosphate. It functions in the pathway one-carbon metabolism; tetrahydrofolate interconversion. This is Formate--tetrahydrofolate ligase from Chloroflexus aggregans (strain MD-66 / DSM 9485).